Here is a 144-residue protein sequence, read N- to C-terminus: Large ribosomal subunit protein uL16 (144 aa).

Belongs to the universal ribosomal protein uL16 family. As to quaternary structure, part of the 50S ribosomal subunit.

Functionally, binds 23S rRNA and is also seen to make contacts with the A and possibly P site tRNAs. This is Large ribosomal subunit protein uL16 from Bacillus cytotoxicus (strain DSM 22905 / CIP 110041 / 391-98 / NVH 391-98).